We begin with the raw amino-acid sequence, 168 residues long: Ribosome maturation factor RimM (168 aa).

One can recognise a PRC barrel domain in the interval 96 to 168 (EGDYYWTDLI…IIVVEWDADF (73 aa)).

The protein belongs to the RimM family. Binds ribosomal protein uS19.

It is found in the cytoplasm. An accessory protein needed during the final step in the assembly of 30S ribosomal subunit, possibly for assembly of the head region. Essential for efficient processing of 16S rRNA. May be needed both before and after RbfA during the maturation of 16S rRNA. It has affinity for free ribosomal 30S subunits but not for 70S ribosomes. This is Ribosome maturation factor RimM from Coxiella burnetii (strain RSA 331 / Henzerling II).